The primary structure comprises 65 residues: Large ribosomal subunit protein bL33m (65 aa).

The transit peptide at 1–8 (MFLSAVTF) directs the protein to the mitochondrion.

Belongs to the bacterial ribosomal protein bL33 family. As to quaternary structure, component of the mitochondrial ribosome large subunit (39S) which comprises a 16S rRNA and about 50 distinct proteins.

Its subcellular location is the mitochondrion. This Bos taurus (Bovine) protein is Large ribosomal subunit protein bL33m (MRPL33).